The sequence spans 1391 residues: DNA-directed RNA polymerase subunit beta'' (1391 aa).

C220, C291, C298, and C301 together coordinate Zn(2+).

Belongs to the RNA polymerase beta' chain family. RpoC2 subfamily. In plastids the minimal PEP RNA polymerase catalytic core is composed of four subunits: alpha, beta, beta', and beta''. When a (nuclear-encoded) sigma factor is associated with the core the holoenzyme is formed, which can initiate transcription. The cofactor is Zn(2+).

It is found in the plastid. The protein localises to the chloroplast. It carries out the reaction RNA(n) + a ribonucleoside 5'-triphosphate = RNA(n+1) + diphosphate. Its function is as follows. DNA-dependent RNA polymerase catalyzes the transcription of DNA into RNA using the four ribonucleoside triphosphates as substrates. The protein is DNA-directed RNA polymerase subunit beta'' of Gossypium barbadense (Sea Island cotton).